Consider the following 165-residue polypeptide: Acireductone dioxygenase (165 aa).

4 residues coordinate Fe(2+): histidine 90, histidine 92, glutamate 96, and histidine 134. 4 residues coordinate Ni(2+): histidine 90, histidine 92, glutamate 96, and histidine 134.

This sequence belongs to the acireductone dioxygenase (ARD) family. In terms of assembly, monomer. The cofactor is Fe(2+). Ni(2+) is required as a cofactor.

It carries out the reaction 1,2-dihydroxy-5-(methylsulfanyl)pent-1-en-3-one + O2 = 3-(methylsulfanyl)propanoate + CO + formate + 2 H(+). The catalysed reaction is 1,2-dihydroxy-5-(methylsulfanyl)pent-1-en-3-one + O2 = 4-methylsulfanyl-2-oxobutanoate + formate + 2 H(+). Its pathway is amino-acid biosynthesis; L-methionine biosynthesis via salvage pathway; L-methionine from S-methyl-5-thio-alpha-D-ribose 1-phosphate: step 5/6. Catalyzes 2 different reactions between oxygen and the acireductone 1,2-dihydroxy-3-keto-5-methylthiopentene (DHK-MTPene) depending upon the metal bound in the active site. Fe-containing acireductone dioxygenase (Fe-ARD) produces formate and 2-keto-4-methylthiobutyrate (KMTB), the alpha-ketoacid precursor of methionine in the methionine recycle pathway. Ni-containing acireductone dioxygenase (Ni-ARD) produces methylthiopropionate, carbon monoxide and formate, and does not lie on the methionine recycle pathway. The sequence is that of Acireductone dioxygenase from Rhodopseudomonas palustris (strain TIE-1).